Reading from the N-terminus, the 142-residue chain is Large ribosomal subunit protein uL13 (142 aa).

Belongs to the universal ribosomal protein uL13 family. As to quaternary structure, part of the 50S ribosomal subunit.

Its function is as follows. This protein is one of the early assembly proteins of the 50S ribosomal subunit, although it is not seen to bind rRNA by itself. It is important during the early stages of 50S assembly. The sequence is that of Large ribosomal subunit protein uL13 from Stenotrophomonas maltophilia (strain R551-3).